A 251-amino-acid polypeptide reads, in one-letter code: uncharacterized protein (251 aa).

Positions 21 to 246 constitute an AMMECR1 domain; it reads KGSSPFAFYA…ITYEEFNKQL (226 aa).

This is an uncharacterized protein from Saccharomyces cerevisiae (strain ATCC 204508 / S288c) (Baker's yeast).